A 266-amino-acid chain; its full sequence is Thymidylate synthase (266 aa).

Residue Arg-24 participates in dUMP binding. His-54 serves as a coordination point for (6R)-5,10-methylene-5,6,7,8-tetrahydrofolate. Arg-129–Arg-130 provides a ligand contact to dUMP. Catalysis depends on Cys-149, which acts as the Nucleophile. DUMP contacts are provided by residues Arg-169–Asp-172, Asn-180, and His-210–Tyr-212. Asp-172 contributes to the (6R)-5,10-methylene-5,6,7,8-tetrahydrofolate binding site. Residue Ala-265 participates in (6R)-5,10-methylene-5,6,7,8-tetrahydrofolate binding.

It belongs to the thymidylate synthase family. Bacterial-type ThyA subfamily. In terms of assembly, homodimer.

The protein resides in the cytoplasm. The catalysed reaction is dUMP + (6R)-5,10-methylene-5,6,7,8-tetrahydrofolate = 7,8-dihydrofolate + dTMP. Its pathway is pyrimidine metabolism; dTTP biosynthesis. Catalyzes the reductive methylation of 2'-deoxyuridine-5'-monophosphate (dUMP) to 2'-deoxythymidine-5'-monophosphate (dTMP) while utilizing 5,10-methylenetetrahydrofolate (mTHF) as the methyl donor and reductant in the reaction, yielding dihydrofolate (DHF) as a by-product. This enzymatic reaction provides an intracellular de novo source of dTMP, an essential precursor for DNA biosynthesis. This Mycobacterium sp. (strain KMS) protein is Thymidylate synthase.